The sequence spans 347 residues: Quinolinate synthase (347 aa).

Iminosuccinate contacts are provided by His-47 and Ser-68. Cys-113 contributes to the [4Fe-4S] cluster binding site. Residues 139 to 141 and Ser-156 each bind iminosuccinate; that span reads YAN. Cys-200 is a binding site for [4Fe-4S] cluster. Iminosuccinate contacts are provided by residues 226–228 and Thr-243; that span reads HPE. [4Fe-4S] cluster is bound at residue Cys-297.

The protein belongs to the quinolinate synthase family. Type 1 subfamily. The cofactor is [4Fe-4S] cluster.

Its subcellular location is the cytoplasm. The catalysed reaction is iminosuccinate + dihydroxyacetone phosphate = quinolinate + phosphate + 2 H2O + H(+). The protein operates within cofactor biosynthesis; NAD(+) biosynthesis; quinolinate from iminoaspartate: step 1/1. In terms of biological role, catalyzes the condensation of iminoaspartate with dihydroxyacetone phosphate to form quinolinate. This is Quinolinate synthase from Salmonella heidelberg (strain SL476).